A 957-amino-acid chain; its full sequence is Receptor-like protein 53 (957 aa).

The N-terminal stretch at 1-30 (MEGFWNSKSIIRITLSFIFLFICHFLDVLA) is a signal peptide. The Extracellular portion of the chain corresponds to 31–910 (APTRNLCRPE…EEEDEDLISW (880 aa)). N-linked (GlcNAc...) asparagine glycans are attached at residues N78, N114, N143, N167, and N191. LRR repeat units lie at residues 120-143 (LHFLTTLDLSFNDFKGQITSSIEN), 144-170 (LSHLTYLDLSSNHFSGQILNSIGNLSR), 172-192 (TYLNLFDNQFSGQAPSSICNL), 193-216 (SHLTFLDLSYNRFFGQFPSSIGGL), 217-240 (SHLTTLSLFSNKFSGQIPSSIGNL), 241-266 (SNLTTLDLSNNNFSGQIPSFIGNLSQ), 268-287 (TFLGLFSNNFVGEIPSSFGN), 288-312 (LNQLTRLYVDDNKLSGNFPNVLLNL), 313-336 (TGLSLLSLSNNKFTGTLPPNITSL), 338-360 (NLMDFDASDNAFTGTFPSFLFTI), 361-384 (PSLTYIRLNGNQLKGTLEFGNISS), and 386-409 (SNLYELDIGNNNFIGPIPSSISKL). 4 N-linked (GlcNAc...) asparagine glycosylation sites follow: N239, N242, N252, and N263. N311 and N332 each carry an N-linked (GlcNAc...) asparagine glycan. N-linked (GlcNAc...) asparagine glycosylation is present at N381. The stretch at 412-433 (LFRLDISHLNTQGPVDFSIFSH) is one LRR 13; degenerate repeat. 16 LRR repeats span residues 434-458 (LKSLLDLNISHLNTTTRIDLNYFLS), 460-483 (FKRLLLLDLSGNHVSATNKSSVSD), 486-509 (SQLIQSLYLSGCGITEFPEFVRTQ), 510-533 (HELGFLDISNNKIKGQVPDWLWRL), 535-556 (ILYYVNLSNNTLIGFQRPSKPE), 558-580 (SLLYLLGSNNNFIGKIPSFICGL), 581-604 (RSLNTLDLSDNNFNGSIPRCMGHL), 605-629 (KSTLSVLNLRQNHLSGGLPKQIFEI), 631-651 (RSLDVGHNQLVGKLPRSLSFF), 652-674 (STLEVLNVESNRINDTFPFWLSS), 675-697 (LPKLQVLVLRSNAFHGPIHEATF), 698-721 (PELRIIDISHNRFNGTLPTEYFVK), 765-789 (LTIYTAVDFSGNRFEGEIPKSIGLL), 790-813 (KELLVLSLSNNAFSGHMPSSMGNL), 814-837 (TALESLDVSKNKLTGEIPQELGDL), and 839-862 (FLAYMNFSHNQLAGLVPGGQQFLT). N-linked (GlcNAc...) asparagine glycans are attached at residues N441, N446, and N477. Residues N540 and N543 are each glycosylated (N-linked (GlcNAc...) asparagine). N-linked (GlcNAc...) asparagine glycosylation is present at N594. N-linked (GlcNAc...) asparagine glycosylation occurs at N665. N-linked (GlcNAc...) asparagine glycosylation occurs at N711. N-linked (GlcNAc...) asparagine glycosylation occurs at N812. N844 and N864 each carry an N-linked (GlcNAc...) asparagine glycan. Residues 911-931 (IAAAIGFGPGIAFGLMFGYIL) form a helical membrane-spanning segment. The Cytoplasmic portion of the chain corresponds to 932 to 957 (VSYKPEWFMNPFDRNNRRQKRHKTTH).

It belongs to the RLP family.

The protein localises to the cell membrane. This is Receptor-like protein 53 from Arabidopsis thaliana (Mouse-ear cress).